The following is a 479-amino-acid chain: Glycerol-3-phosphate acyltransferase RAM2 (479 aa).

Helical transmembrane passes span 14–34 (YFAL…LVLA), 37–57 (LAGL…LIFA), 215–235 (SPLM…LACL), and 237–257 (IAAG…ALGV). Positions 284 to 289 (HRTLLD) match the HXXXXD motif motif. N448 carries an N-linked (GlcNAc...) asparagine glycan.

It belongs to the GPAT/DAPAT family.

It is found in the membrane. The enzyme catalyses sn-glycerol 3-phosphate + an acyl-CoA = a 1-acyl-sn-glycero-3-phosphate + CoA. The protein operates within lipid metabolism; glycerolipid metabolism. Functionally, involved in the production of cutin monomers. Esterifies acyl-group from acyl-ACP to the sn-2 position of glycerol-3-phosphate, a step in cutin biosynthesis. Required for colonization of the root by mycorrhizal fungi, and appropriate hyphopodia and arbuscule formation. Cutin monomers act as plant signals that promote colonization by arbuscular mycorrhizal fungi. This signaling function has been recruited by pathogenic oomycetes to facilitate appressoria formation and their own invasion. The protein is Glycerol-3-phosphate acyltransferase RAM2 of Petunia hybrida (Petunia).